A 509-amino-acid polypeptide reads, in one-letter code: Lysine--tRNA ligase (509 aa).

Residues Glu-418 and Glu-425 each coordinate Mg(2+).

Belongs to the class-II aminoacyl-tRNA synthetase family. In terms of assembly, homodimer. Mg(2+) is required as a cofactor.

Its subcellular location is the cytoplasm. It carries out the reaction tRNA(Lys) + L-lysine + ATP = L-lysyl-tRNA(Lys) + AMP + diphosphate. The polypeptide is Lysine--tRNA ligase (lysS) (Acinetobacter baylyi (strain ATCC 33305 / BD413 / ADP1)).